The chain runs to 310 residues: Iron ABC transporter substrate-binding lipoprotein MtsA (310 aa).

Residues 1-20 (MGKRMSLILGAFLSVFLLVA) form the signal peptide. Cys-21 carries N-palmitoyl cysteine lipidation. Cys-21 carries S-diacylglycerol cysteine lipidation. Fe(2+) contacts are provided by His-68, His-140, Glu-206, and Asp-281.

This sequence belongs to the bacterial solute-binding protein 9 family. Lipoprotein receptor antigen (Lrai) subfamily.

Its subcellular location is the cell membrane. Its function is as follows. Part of the ATP-binding cassette (ABC) transport system MtsABC involved in iron import. Binds iron with high affinity and specificity and delivers it to the membrane permease for translocation into the cytoplasm. Has low affinity for Zn(2+) and Cu(2+). The sequence is that of Iron ABC transporter substrate-binding lipoprotein MtsA (mtsA) from Streptococcus pyogenes serotype M1.